The primary structure comprises 283 residues: tRNA pseudouridine synthase A (283 aa).

Asp-73 functions as the Nucleophile in the catalytic mechanism. The interval 120 to 124 (FHARF) is RNA binding. Residue Tyr-131 coordinates substrate. The tract at residues 181 to 185 (QCQSR) is interaction with tRNA.

This sequence belongs to the tRNA pseudouridine synthase TruA family. Homodimer.

The enzyme catalyses uridine(38/39/40) in tRNA = pseudouridine(38/39/40) in tRNA. In terms of biological role, formation of pseudouridine at positions 38, 39 and 40 in the anticodon stem and loop of transfer RNAs. The protein is tRNA pseudouridine synthase A of Pectobacterium atrosepticum (strain SCRI 1043 / ATCC BAA-672) (Erwinia carotovora subsp. atroseptica).